Consider the following 339-residue polypeptide: Cyclin-D1-1 (339 aa).

The protein belongs to the cyclin family. Cyclin D subfamily. Interacts with CDKA-1 and KRP6/ICK4. As to expression, expressed in roots, leaves and flowers.

In terms of biological role, may activate cell cycle in the root apical meristem (RAM) and promote embryonic root (radicle) protrusion. The protein is Cyclin-D1-1 (CYCD1-1) of Arabidopsis thaliana (Mouse-ear cress).